Here is a 602-residue protein sequence, read N- to C-terminus: Elongation factor 4 (602 aa).

The 183-residue stretch at 7–189 (SKIRNFCIIA…AVVSRIPHPQ (183 aa)) folds into the tr-type G domain. Residues 19–24 (DHGKST) and 136–139 (NKVD) each bind GTP.

It belongs to the TRAFAC class translation factor GTPase superfamily. Classic translation factor GTPase family. LepA subfamily.

The protein localises to the cell inner membrane. The catalysed reaction is GTP + H2O = GDP + phosphate + H(+). Its function is as follows. Required for accurate and efficient protein synthesis under certain stress conditions. May act as a fidelity factor of the translation reaction, by catalyzing a one-codon backward translocation of tRNAs on improperly translocated ribosomes. Back-translocation proceeds from a post-translocation (POST) complex to a pre-translocation (PRE) complex, thus giving elongation factor G a second chance to translocate the tRNAs correctly. Binds to ribosomes in a GTP-dependent manner. The protein is Elongation factor 4 of Prochlorococcus marinus subsp. pastoris (strain CCMP1986 / NIES-2087 / MED4).